A 633-amino-acid polypeptide reads, in one-letter code: Chaperone protein HtpG (633 aa).

The interval 1–341 is a; substrate-binding; it reads MTAPHETMSF…SADLPLNVSR (341 aa). A b region spans residues 342–562; it reads ELLQESRDVK…EGDMSGYLQR (221 aa). The interval 563 to 633 is c; it reads LLKQAGQKAP…YVQRVNKLLA (71 aa).

The protein belongs to the heat shock protein 90 family. Homodimer.

Its subcellular location is the cytoplasm. In terms of biological role, molecular chaperone. Has ATPase activity. In Cupriavidus taiwanensis (strain DSM 17343 / BCRC 17206 / CCUG 44338 / CIP 107171 / LMG 19424 / R1) (Ralstonia taiwanensis (strain LMG 19424)), this protein is Chaperone protein HtpG.